Consider the following 308-residue polypeptide: Probable manganese-dependent inorganic pyrophosphatase (308 aa).

Positions 9, 13, 15, 75, 97, and 149 each coordinate Mn(2+).

Belongs to the PPase class C family. The cofactor is Mn(2+).

The protein resides in the cytoplasm. It carries out the reaction diphosphate + H2O = 2 phosphate + H(+). In Listeria monocytogenes serotype 4a (strain HCC23), this protein is Probable manganese-dependent inorganic pyrophosphatase.